Reading from the N-terminus, the 362-residue chain is Mortality factor 4-like protein 1 (362 aa).

The 40-residue stretch at 12 to 51 folds into the Tudor-knot domain; the sequence is QEGERVLCFHGPLLYEAKCVKVAIKDKQVKYFIHYSGWNK. Positions 26–62 are interaction with KAT8; it reads YEAKCVKVAIKDKQVKYFIHYSGWNKKSAVRPRRSEK. A disordered region spans residues 113-182; sequence RELQKANQEQ…RKKRARVDPT (70 aa). Residues 133–266 form a sufficient for interaction with SIN3A region; sequence PGKKTSGLQQ…VAGIKEYFNV (134 aa). The Nuclear localization signal signature appears at 135–146; that stretch reads KKTSGLQQKNVE. K143 bears the N6-acetyllysine mark. Residues 164 to 230 form an interaction with RB1-1 region; that stretch reads STSETPQPPR…FYLPAKKNVD (67 aa). The tract at residues 188-342 is sufficient for interaction with PHF12; it reads TFMNRVEVKV…FLKYLAKNSA (155 aa). The MRG domain occupies 191-362; that stretch reads NRVEVKVKIP…APPEYHRKAV (172 aa). The interaction with RB1-2 stretch occupies residues 323–344; that stretch reads LALLLNYLHDFLKYLAKNSATL.

Component of the NuA4 histone acetyltransferase complex which contains the catalytic subunit KAT5/TIP60 and the subunits EP400, TRRAP/PAF400, BRD8/SMAP, EPC1, DMAP1/DNMAP1, RUVBL1/TIP49, RUVBL2, ING3, actin, ACTL6A/BAF53A, MORF4L1/MRG15, MORF4L2/MRGX, MRGBP, YEATS4/GAS41, VPS72/YL1 and MEAF6. The NuA4 complex interacts with MYC and the adenovirus E1A protein. MORF4L1 may also participate in the formation of NuA4 related complexes which lack the KAT5/TIP60 catalytic subunit, but which include the SWI/SNF related protein SRCAP. Component of the mSin3A histone deacetylase complex, which includes SIN3A, HDAC2, ARID4B, MORF4L1, RBBP4/RbAp48, and RBBP7/RbAp46. May also interact with PHF12 and one or more as yet undefined members of the TLE (transducin-like enhancer of split) family of transcriptional repressors. Component of the SIN3B complex, which includes SIN3B, HDAC2 or HDAC1, PHF12 and MORF4L1. Interacts with RB1 and KAT8. Interacts with the N-terminus of MRFAP1. Found in a complex composed of MORF4L1, MRFAP1 and RB1. Interacts with the entire BRCA complex, which contains BRCA1, PALB2, BRCA2 and RAD51. Interacts with PALB2. Forms a complex with MSL1 and NUPR1.

The protein localises to the nucleus. Functionally, component of the NuA4 histone acetyltransferase (HAT) complex which is involved in transcriptional activation of select genes principally by acetylation of nucleosomal histones H4 and H2A. This modification may both alter nucleosome - DNA interactions and promote interaction of the modified histones with other proteins which positively regulate transcription. This complex may be required for the activation of transcriptional programs associated with oncogene and proto-oncogene mediated growth induction, tumor suppressor mediated growth arrest and replicative senescence, apoptosis, and DNA repair. The NuA4 complex ATPase and helicase activities seem to be, at least in part, contributed by the association of RUVBL1 and RUVBL2 with EP400. NuA4 may also play a direct role in DNA repair when directly recruited to sites of DNA damage. As part of the SIN3B complex represses transcription and counteracts the histone acetyltransferase activity of EP300 through the recognition H3K27ac marks by PHF12 and the activity of the histone deacetylase HDAC2. SIN3B complex is recruited downstream of the constitutively active genes transcriptional start sites through interaction with histones and mitigates histone acetylation and RNA polymerase II progression within transcribed regions contributing to the regulation of transcription. Required for homologous recombination repair (HRR) and resistance to mitomycin C (MMC). Involved in the localization of PALB2, BRCA2 and RAD51, but not BRCA1, to DNA-damage foci. The sequence is that of Mortality factor 4-like protein 1 (Morf4l1) from Mus musculus (Mouse).